A 2715-amino-acid polypeptide reads, in one-letter code: MDVKERRPYCSLTKSRREKERRYTNSSADNEECRVPTQKSYSSSETLKAFDHDYSRLLYGNRVKDLVHREADEYTRQGQNFTLRQLGVCESATRRGVAFCAEMGLPHRGYSISAGSDADTENEAVMSPEHAMRLWGRGVKSGRSSCLSSRSNSALTLTDTEHENRSDSESEQPSNNPGQPTLQPLPPSHKQHPAQHHPSITSLNRNSLTNRRNQSPAPPAALPAELQTTPESVQLQDSWVLGSNVPLESRHFLFKTGTGTTPLFSTATPGYTMASGSVYSPPTRPLPRNTLSRSAFKFKKSSKYCSWRCTALCAVGVSVLLAILLSYFIAMHLFGLNWHLQQTENDTFENGKVNSDTVPTNTVSLPSGDNGKLGGFTHENNTIDSGELDIGRRAIQEVPPGIFWRSQLFIDQPQFLKFNISLQKDALIGVYGRKGLPPSHTQYDFVELLDGSRLIAREQRNLVESERAGRQARSVSLHEAGFIQYLDSGIWHLAFYNDGKNPEQVSFNTIVIESVVECPRNCHGNGECVSGTCHCFPGFLGPDCSRAACPVLCSGNGQYSKGRCLCFSGWKGTECDVPTTQCIDPQCGGRGICIMGSCACNSGYKGENCEEADCLDPGCSNHGVCIHGECHCNPGWGGSNCEILKTMCADQCSGHGTYLQESGSCTCDPNWTGPDCSNEICSVDCGSHGVCMGGSCRCEEGWTGPACNQRACHPRCAEHGTCKDGKCECSQGWNGEHCTIAHYLDKIVKEGCPGLCNSNGRCTLDQNGWHCVCQPGWRGAGCDVAMETLCTDSKDNEGDGLIDCMDPDCCLQSSCQNQPYCRGLPDPQDIISQSLQTPSQQAAKSFYDRISFLIGSDSTHVLPGESPFNKSLASVIRGQVLTADGTPLIGVNVSFLHYSEYGYTITRQDGMFDLVANGGASLTLVFERSPFLTQYHTVWIPWNVFYVMDTLVMKKEENDIPSCDLSGFVRPSPIIVSSPLSTFFRSSPEDSPIIPETQVLHEETTIPGTDLKLSYLSSRAAGYKSVLKITMTQAVIPFNLMKVHLMVAVVGRLFQKWFPASPNLAYTFIWDKTDAYNQKVYGLSEAVVSVGYEYESCLDLTLWEKRTAVLQGYELDASNMGGWTLDKHHVLDVQNGILYKGNGENQFISQQPPVVSSIMGNGRRRSISCPSCNGQADGNKLLAPVALACGIDGSLYVGDFNYVRRIFPSGNVTSVLELRNKDFRHSSNPAHRYYLATDPVTGDLYVSDTNTRRIYRPKSLTGAKDLTKNAEVVAGTGEQCLPFDEARCGDGGKAVEATLMSPKGMAIDKNGLIYFVDGTMIRKVDQNGIISTLLGSNDLTSARPLTCDTSMHISQVRLEWPTDLAINPMDNSIYVLDNNVVLQITENRQVRIAAGRPMHCQVPGVEYPVGKHAVQTTLESATAIAVSYSGVLYITETDEKKINRIRQVTTDGEISLVAGIPSECDCKNDANCDCYQSGDGYAKDAKLNAPSSLAASPDGTLYIADLGNIRIRAVSKNKPLLNSMNFYEVASPTDQELYIFDINGTHQYTVSLVTGDYLYNFSYSNDNDVTAVTDSNGNTLRIRRDPNRMPVRVVSPDNQVIWLTIGTNGCLKSMTAQGLELVLFTYHGNSGLLATKSDETGWTTFFDYDSEGRLTNVTFPTGVVTNLHGDMDKAITVDIESSSREEDVSITSNLSSIDSFYTMVQDQLRNSYQIGYDGSLRIFYASGLDSHYQTEPHVLAGTANPTVAKRNMTLPGENGQNLVEWRFRKEQAQGKVNVFGRKLRVNGRNLLSVDFDRTTKTEKIYDDHRKFLLRIAYDTSGHPTLWLPSSKLMAVNVTYSSTGQIASIQRGTTSEKVDYDSQGRIVSRVFADGKTWSYTYLEKSMVLLLHSQRQYIFEYDMWDRLSAITMPSVARHTMQTIRSIGYYRNIYNPPESNASIITDYNEEGLLLQTAFLGTSRRVLFKYRRQTRLSEILYDSTRVSFTYDETAGVLKTVNLQSDGFICTIRYRQIGPLIDRQIFRFSEDGMVNARFDYSYDNSFRVTSMQGVINETPLPIDLYQFDDISGKVEQFGKFGVIYYDINQIISTAVMTYTKHFDAHGRIKEIQYEIFRSLMYWITIQYDNMGRVTKREIKIGPFANTTKYAYEYDVDGQLQTVYLNEKIMWRYNYDLNGNLHLLNPSSSARLTPLRYDLRDRITRLGDVQYRLDEDGFLRQRGTEIFEYSSKGLLTRVYSKGSGWTVIYRYDGLGRRVSSKTSLGQHLQFFYADLTYPTRITHVYNHSSSEITSLYYDLQGHLFAMEISSGDEFYIASDNTGTPLAVFSSNGLMLKQTQYTAYGEIYFDSNVDFQLVIGFHGGLYDPLTKLIHFGERDYDILAGRWTTPDIEIWKRIGKDPAPFNLYMFRNNNPASKIHDVKDYITDVNSWLVTFGFHLHNAIPGFPVPKFDLTEPSYELVKSQQWEDVPPIFGVQQQVARQAKAFLSLGKMAEVQVSRRKAGAEQSWLWFATVKSLIGKGVMLAVSQGRVQTNVLNIANEDCIKVAAVLNNAFYLENLHFTIEGKDTHYFIKTTTPESDLGTLRLTSGRKALENGINVTVSQSTTVVNGRTRRFADVEMQFGALALHVRYGMTLDEEKARILEQARQRALARAWAREQQRVRDGEEGARLWTEGEKRQLLSAGKVQGYDGYYVLSVEQYPELADSANNIQFLRQSEIGKR.

2 disordered regions span residues 1 to 38 (MDVKERRPYCSLTKSRREKERRYTNSSADNEECRVPTQ) and 142 to 223 (GRSS…AALP). The region spanning 1 to 309 (MDVKERRPYC…KSSKYCSWRC (309 aa)) is the Teneurin N-terminal domain. Topologically, residues 1–310 (MDVKERRPYC…SSKYCSWRCT (310 aa)) are cytoplasmic. Residues 142-153 (GRSSCLSSRSNS) are compositionally biased toward low complexity. Positions 159 to 168 (DTEHENRSDS) are enriched in basic and acidic residues. Positions 171–182 (EQPSNNPGQPTL) are enriched in polar residues. The segment covering 201-213 (TSLNRNSLTNRRN) has biased composition (low complexity). Residues 311 to 331 (ALCAVGVSVLLAILLSYFIAM) form a helical membrane-spanning segment. The Extracellular portion of the chain corresponds to 332–2715 (HLFGLNWHLQ…FLRQSEIGKR (2384 aa)). Asn-345, Asn-380, and Asn-419 each carry an N-linked (GlcNAc...) asparagine glycan. EGF-like domains lie at 514 to 545 (SVVECPRNCHGNGECVSGTCHCFPGFLGPDCS), 546 to 576 (RAACPVLCSGNGQYSKGRCLCFSGWKGTECD), 578 to 610 (PTTQCIDPQCGGRGICIMGSCACNSGYKGENCE), 611 to 642 (EADCLDPGCSNHGVCIHGECHCNPGWGGSNCE), 644 to 677 (LKTMCADQCSGHGTYLQESGSCTCDPNWTGPDCS), 678 to 709 (NEICSVDCGSHGVCMGGSCRCEEGWTGPACNQ), 710 to 739 (RACHPRCAEHGTCKDGKCECSQGWNGEHCT), and 740 to 783 (IAHY…AGCD). Disulfide bonds link Cys-518–Cys-528, Cys-522–Cys-533, Cys-535–Cys-544, Cys-553–Cys-564, Cys-566–Cys-575, Cys-582–Cys-593, Cys-587–Cys-598, Cys-600–Cys-609, Cys-614–Cys-625, Cys-619–Cys-630, Cys-632–Cys-641, Cys-652–Cys-665, Cys-667–Cys-676, Cys-681–Cys-691, Cys-685–Cys-696, Cys-698–Cys-707, Cys-712–Cys-722, Cys-716–Cys-727, Cys-729–Cys-738, Cys-752–Cys-762, Cys-756–Cys-771, and Cys-773–Cys-782. Asn-670 is a glycosylation site (N-linked (GlcNAc...) asparagine). N-linked (GlcNAc...) asparagine glycosylation is found at Asn-869 and Asn-892. One copy of the NHL 1 repeat lies at 1181 to 1209 (LLAPVALACGIDGSLYVGDFNYVRRIFPS). The N-linked (GlcNAc...) asparagine glycan is linked to Asn-1211. 5 NHL repeats span residues 1216–1260 (LELR…PKSL), 1286–1330 (ARCG…NGII), 1347–1387 (CDTS…ITEN), 1418–1445 (LESATAIAVSYSGVLYITETDEKKINRI), and 1474–1517 (CYQS…VSKN). One copy of the YD 1 repeat lies at 1527–1546 (YEVASPTDQELYIFDINGTH). 2 N-linked (GlcNAc...) asparagine glycosylation sites follow: Asn-1543 and Asn-1560. 3 YD repeats span residues 1563–1583 (YSNDNDVTAVTDSNGNTLRIR), 1626–1645 (YHGNSGLLATKSDETGWTTF), and 1646–1668 (FDYDSEGRLTNVTFPTGVVTNLH). N-linked (GlcNAc...) asparagine glycans are attached at residues Asn-1656, Asn-1693, Asn-1751, and Asn-1836. 18 YD repeats span residues 1839 to 1858 (YSSTGQIASIQRGTTSEKVD), 1880 to 1898 (YLEKSMVLLLHSQRQYIFE), 1899 to 1919 (YDMWDRLSAITMPSVARHTMQ), 1926 to 1943 (YYRNIYNPPESNASIITD), 1944 to 1965 (YNEEGLLLQTAFLGTSRRVLFK), 1966 to 1983 (YRRQTRLSEILYDSTRVS), 1986 to 2006 (YDETAGVLKTVNLQSDGFICT), 2009 to 2029 (YRQIGPLIDRQIFRFSEDGMV), 2037 to 2056 (YDNSFRVTSMQGVINETPLP), 2062 to 2079 (FDDISGKVEQFGKFGVIY), 2080 to 2106 (YDINQIISTAVMTYTKHFDAHGRIKEI), 2108 to 2121 (YEIFRSLMYWITIQ), 2122 to 2145 (YDNMGRVTKREIKIGPFANTTKYA), 2148 to 2168 (YDVDGQLQTVYLNEKIMWRYN), 2169 to 2189 (YDLNGNLHLLNPSSSARLTPL), 2191 to 2211 (YDLRDRITRLGDVQYRLDEDG), 2223 to 2243 (YSSKGLLTRVYSKGSGWTVIY), and 2245 to 2265 (YDGLGRRVSSKTSLGQHLQFF). Asn-1937 carries N-linked (GlcNAc...) asparagine glycosylation. N-linked (GlcNAc...) asparagine glycosylation occurs at Asn-2140. Asn-2280 carries N-linked (GlcNAc...) asparagine glycosylation. The YD 23 repeat unit spans residues 2291-2332 (YDLQGHLFAMEISSGDEFYIASDNTGTPLAVFSSNGLMLKQT). Asn-2592 is a glycosylation site (N-linked (GlcNAc...) asparagine).

This sequence belongs to the tenascin family. Teneurin subfamily. As to quaternary structure, homodimer; disulfide-linked; to mediate homophilic cell adhesion. Most isoforms (isoform-type A and type-B) can mediate homophilic interaction. Heterodimer with either TENM1 or TENM2. May also form heterodimer with TENM4. Isoform A0B0: Does not form homodimer to mediate homophilic cell adhesion. Isoform A0B0: Heterodimer with ADGRL3. As to expression, in brain, expressed in highly specific regions of the postnatal brain: expressed in restricted domains of the developing hippocampal region, including proximal CA1, distal subiculum, and medial entorhinal cortex (at protein level). Expression matches with topographic connectivity between entorhinal cortex, CA1, and subiculum (at protein level). Also specifically expressed in subregions of the presubiculum, parasubiculum, medial mammillary nucleus and anteroventral thalamic nucleus that are topographically connected with subiculum or entorhinal cortex (at protein level). Expressed in neurons of the developing visual pathway (at protein level). Expressed in the dorsal and ventral lateral geniculate nucleus (dLGN and vLGN) and optic tract at birth. Expressed in ipsilateral retinal axons of terminal zones (TZs) in the developing superior colliculus (SC) throughout the first postnatal week. Expressed in the layer V of the visual caudal cortex. Expressed in the femoral and mandibular condylar cartilages. Strongly expressed in fibrous and proliferating chondrocytes. Poorly expressed in mature chondrocytes. Not expressed in hypertrophic chondrocytes.

It is found in the cell membrane. The protein resides in the cell projection. It localises to the axon. Functionally, involved in neural development by regulating the establishment of proper connectivity within the nervous system. Acts in both pre- and postsynaptic neurons in the hippocampus to control the assembly of a precise topographic projection: required in both CA1 and subicular neurons for the precise targeting of proximal CA1 axons to distal subiculum, probably by promoting homophilic cell adhesion. Promotes homophilic adhesion in a splicing isoform-dependent manner: most isoforms (isoform-type A and type-B) can mediate homophilic interaction. Promotes axon guidance. Required for proper dendrite morphogenesis and axon targeting in the vertebrate visual system, thereby playing a key role in the development of the visual pathway. Regulates the formation in ipsilateral retinal mapping to both the dorsal lateral geniculate nucleus (dLGN) and the superior colliculus (SC). May also be involved in the differentiation of the fibroblast-like cells in the superficial layer of mandibular condylar cartilage into chondrocytes. The chain is Teneurin-3 from Mus musculus (Mouse).